A 182-amino-acid chain; its full sequence is uncharacterized protein (182 aa).

Its subcellular location is the mitochondrion. This is an uncharacterized protein from Schizosaccharomyces pombe (strain 972 / ATCC 24843) (Fission yeast).